Reading from the N-terminus, the 87-residue chain is Defensin-like protein 223 (87 aa).

An N-terminal signal peptide occupies residues 1 to 34 (MKSTIFVLTLLIFVSLYFNIIVYVSFSFIGTSEI). 3 cysteine pairs are disulfide-bonded: Cys-55–Cys-72, Cys-58–Cys-77, and Cys-62–Cys-79.

This sequence belongs to the DEFL family.

The protein resides in the secreted. This chain is Defensin-like protein 223, found in Arabidopsis thaliana (Mouse-ear cress).